Consider the following 475-residue polypeptide: ADP-ribose glycohydrolase MACROD2 (475 aa).

In terms of domain architecture, Macro spans 59 to 240 (QEAPQMKKSL…IYKKKMNEFF (182 aa)). Substrate contacts are provided by residues 77–79 (GDI), 90–92 (AAN), and 97–102 (GGGGVD). Lys-170 is covalently cross-linked (Glycyl lysine isopeptide (Lys-Gly) (interchain with G-Cter in ubiquitin)). Substrate is bound by residues 185-191 (ISTGIYG) and Phe-224. Disordered stretches follow at residues 241–306 (PVDD…SQEA) and 324–475 (GVNT…EDLQ). Basic and acidic residues-rich tracts occupy residues 251–261 (ADMKEDSEGPE) and 335–359 (SEDKAEVHKDEDSAKDDNTVKDSDM). The span at 360-375 (TNHSVCDQELPNGQEN) shows a compositional bias: polar residues. Residues 376 to 386 (DSAKSEGKTEA) are compositionally biased toward basic and acidic residues. Polar residues-rich tracts occupy residues 387–402 (ESPSSSMETEDLSPNQ) and 440–469 (SQGSSEAENTSGPDVDMNSQVDGVNEPTES).

The protein belongs to the MacroD-type family. MacroD1/2-like subfamily. Interacts with ADP-ribosylated PARP1. In terms of tissue distribution, expressed in the kidney.

It is found in the nucleus. The catalysed reaction is 2''-O-acetyl-ADP-D-ribose + H2O = ADP-D-ribose + acetate + H(+). It carries out the reaction 4-O-(ADP-D-ribosyl)-L-aspartyl-[protein] + H2O = L-aspartyl-[protein] + ADP-D-ribose + H(+). The enzyme catalyses 5-O-(ADP-D-ribosyl)-L-glutamyl-[protein] + H2O = L-glutamyl-[protein] + ADP-D-ribose + H(+). It catalyses the reaction alpha-NAD(+) + H2O = ADP-D-ribose + nicotinamide + H(+). With respect to regulation, subject to product inhibition by ADP-ribose. Functionally, removes ADP-ribose from aspartate and glutamate residues in proteins bearing a single ADP-ribose moiety. Inactive towards proteins bearing poly-ADP-ribose. Deacetylates O-acetyl-ADP ribose, a signaling molecule generated by the deacetylation of acetylated lysine residues in histones and other proteins. In Mus musculus (Mouse), this protein is ADP-ribose glycohydrolase MACROD2.